The primary structure comprises 129 residues: MAKKTVAAKKRNVKVDANGQLHVHSSFNNIIVSLANSEGQIISWSSAGKMGFRGSKKNTPYAAQMAAQDCAKIAFDLGLRKVKAYVKGPGNGRESAIRTIHGAGIEVTEIIDVTPLPHNGCRPPKRRRV.

This sequence belongs to the universal ribosomal protein uS11 family. Part of the 30S ribosomal subunit. Interacts with proteins S7 and S18. Binds to IF-3.

Its function is as follows. Located on the platform of the 30S subunit, it bridges several disparate RNA helices of the 16S rRNA. Forms part of the Shine-Dalgarno cleft in the 70S ribosome. This is Small ribosomal subunit protein uS11 from Bacteroides thetaiotaomicron (strain ATCC 29148 / DSM 2079 / JCM 5827 / CCUG 10774 / NCTC 10582 / VPI-5482 / E50).